The following is a 740-amino-acid chain: Alpha-1,6-mannosylglycoprotein 6-beta-N-acetylglucosaminyltransferase A (740 aa).

Over 1–13 the chain is Cytoplasmic; that stretch reads MAFFTPWKLSSQK. The helical; Signal-anchor for type II membrane protein transmembrane segment at 14–30 threads the bilayer; the sequence is LGFFLVTFGFIWGMMLL. Over 31–740 the chain is Lumenal; sequence HFTIQQRTQP…GQVALCKDCL (710 aa). 3 N-linked (GlcNAc...) asparagine glycosylation sites follow: N109, N114, and N117. Disulfide bonds link C144–C182, C155–C195, C171–C337, C371–C625, C648–C723, C652–C725, C659–C712, C680–C701, and C736–C739. Residues 212-740 are sufficient for catalytic activity; that stretch reads NSLAEIRTDF…GQVALCKDCL (529 aa). Residue N333 is glycosylated (N-linked (GlcNAc...) asparagine). 377 to 378 provides a ligand contact to substrate; the sequence is DS. N-linked (GlcNAc...) asparagine glycosylation is found at N432 and N446. E525 serves as a coordination point for UDP-N-acetyl-alpha-D-glucosamine. Substrate is bound at residue K553.

This sequence belongs to the glycosyltransferase 18 family. N-glycosylated. Post-translationally, a secreted form is released from the membrane after cleavage by gamma-secretase.

It localises to the golgi apparatus membrane. The protein resides in the secreted. It carries out the reaction N(4)-{beta-D-GlcNAc-(1-&gt;2)-[beta-D-GlcNAc-(1-&gt;4)]-alpha-D-Man-(1-&gt;3)-[beta-D-GlcNAc-(1-&gt;2)-alpha-D-Man-(1-&gt;6)]-beta-D-Man-(1-&gt;4)-beta-D-GlcNAc-(1-&gt;4)-beta-D-GlcNAc}-L-asparaginyl-[protein] + UDP-N-acetyl-alpha-D-glucosamine = N(4)-{beta-D-GlcNAc-(1-&gt;2)-[beta-D-GlcNAc-(1-&gt;4)]-alpha-D-Man-(1-&gt;3)-[beta-D-GlcNAc-(1-&gt;2)-[beta-D-GlcNAc-(1-&gt;6)]-alpha-D-Man-(1-&gt;6)]-beta-D-Man-(1-&gt;4)-beta-D-GlcNAc-(1-&gt;4)-beta-D-GlcNAc}-L-asparaginyl-[protein] + UDP + H(+). Its pathway is protein modification; protein glycosylation. Catalyzes the addition of N-acetylglucosamine (GlcNAc) in beta 1-6 linkage to the alpha-linked mannose of biantennary N-linked oligosaccharides. Catalyzes an important step in the biosynthesis of branched, complex-type N-glycans, such as those found on EGFR, TGFR (TGF-beta receptor) and CDH2. Via its role in the biosynthesis of complex N-glycans, plays an important role in the activation of cellular signaling pathways, reorganization of the actin cytoskeleton, cell-cell adhesion and cell migration. MGAT5-dependent EGFR N-glycosylation enhances the interaction between EGFR and LGALS3 and thereby prevents rapid EGFR endocytosis and prolongs EGFR signaling. Required for efficient interaction between TGFB1 and its receptor. Enhances activation of intracellular signaling pathways by several types of growth factors, including FGF2, PDGF, IGF, TGFB1 and EGF. MGAT5-dependent CDH2 N-glycosylation inhibits CDH2-mediated homotypic cell-cell adhesion and contributes to the regulation of downstream signaling pathways. Promotes cell migration. Contributes to the regulation of the inflammatory response. MGAT5-dependent TCR N-glycosylation enhances the interaction between TCR and LGALS3, limits agonist-induced TCR clustering, and thereby dampens TCR-mediated responses to antigens. Required for normal leukocyte evasation and accumulation at sites of inflammation. Inhibits attachment of monocytes to the vascular endothelium and subsequent monocyte diapedesis. In terms of biological role, promotes proliferation of umbilical vein endothelial cells and angiogenesis, at least in part by promoting the release of the growth factor FGF2 from the extracellular matrix. In Cricetulus griseus (Chinese hamster), this protein is Alpha-1,6-mannosylglycoprotein 6-beta-N-acetylglucosaminyltransferase A (MGAT5).